A 361-amino-acid polypeptide reads, in one-letter code: Diacylglycerol O-acyltransferase 2 (361 aa).

The Cytoplasmic portion of the chain corresponds to 1 to 42; that stretch reads MKTIIAAYSGVLRGTGSSLLSAVHDLPSIPWLSKSSVVRHLQ. Residues 43-61 form a helical membrane-spanning segment; that stretch reads IISVLQWVLSFLILGVACT. The Lumenal segment spans residues 62 to 65; that stretch reads AVLV. Residues 66–85 traverse the membrane as a helical segment; sequence YIFCTDLWLIAALYFTWMVL. Over 86-361 the chain is Cytoplasmic; sequence DWNTPYKGGR…LPDSETLEFI (276 aa).

It belongs to the diacylglycerol acyltransferase family.

The protein resides in the endoplasmic reticulum membrane. Its subcellular location is the lipid droplet. The protein localises to the cytoplasm. It is found in the perinuclear region. The enzyme catalyses an acyl-CoA + a 1,2-diacyl-sn-glycerol = a triacyl-sn-glycerol + CoA. It carries out the reaction all-trans-retinol + an acyl-CoA = an all-trans-retinyl ester + CoA. The catalysed reaction is 2-(9Z-octadecenoyl)-glycerol + (9Z)-octadecenoyl-CoA = 1,2-di-(9Z-octadecenoyl)-sn-glycerol + CoA. It catalyses the reaction 1,2-di-(9Z-octadecenoyl)-sn-glycerol + (9Z)-octadecenoyl-CoA = 1,2,3-tri-(9Z-octadecenoyl)-glycerol + CoA. The enzyme catalyses all-trans-retinol + hexadecanoyl-CoA = all-trans-retinyl hexadecanoate + CoA. It carries out the reaction 1-O-(9Z-octadecenyl)-glycerol + (9Z)-octadecenoyl-CoA = 1-O-(9Z-octadecyl)-3-(9Z-octadecenoyl)-glycerol + CoA. The catalysed reaction is 1-(9Z-octadecenoyl)-glycerol + (9Z)-octadecenoyl-CoA = 1,2-di-(9Z-octadecenoyl)-glycerol + CoA. It catalyses the reaction 1,2-di-(9Z-octadecenoyl)-sn-glycerol + hexadecanoyl-CoA = 1,2-di-(9Z)-octadecenoyl-3-hexadecanoyl-sn-glycerol + CoA. The enzyme catalyses 1,3-di-(9Z-octadecenoyl)-glycerol + (9Z)-octadecenoyl-CoA = 1,2,3-tri-(9Z-octadecenoyl)-glycerol + CoA. It carries out the reaction 2,3-di-(9Z)-octadecenoyl-sn-glycerol + (9Z)-octadecenoyl-CoA = 1,2,3-tri-(9Z-octadecenoyl)-glycerol + CoA. The catalysed reaction is 2-(9Z-octadecenoyl)-glycerol + hexadecanoyl-CoA = 1-hexadecanoyl-2-(9Z-octadecenoyl)-sn-glycerol + CoA. Its pathway is glycerolipid metabolism; triacylglycerol biosynthesis. In terms of biological role, essential acyltransferase that catalyzes the terminal and only committed step in triacylglycerol synthesis by using diacylglycerol and fatty acyl CoA as substrates. Required for synthesis and storage of intracellular triglycerides. Probably plays a central role in cytosolic lipid accumulation. This Xenopus laevis (African clawed frog) protein is Diacylglycerol O-acyltransferase 2 (dgat2).